The sequence spans 343 residues: GTP 3',8-cyclase (343 aa).

Residues 19–244 enclose the Radical SAM core domain; sequence PFGRNISYLR…TDLDDSTGGP (226 aa). GTP is bound at residue Arg-28. Cys-35 and Cys-39 together coordinate [4Fe-4S] cluster. Tyr-41 contributes to the S-adenosyl-L-methionine binding site. [4Fe-4S] cluster is bound at residue Cys-42. Arg-77 contributes to the GTP binding site. Gly-81 provides a ligand contact to S-adenosyl-L-methionine. Thr-111 provides a ligand contact to GTP. Ser-135 contributes to the S-adenosyl-L-methionine binding site. Lys-171 is a binding site for GTP. Met-205 contacts S-adenosyl-L-methionine. Residues Cys-268 and Cys-271 each coordinate [4Fe-4S] cluster. Residue 273–275 coordinates GTP; that stretch reads RVR. [4Fe-4S] cluster is bound at residue Cys-285.

This sequence belongs to the radical SAM superfamily. MoaA family. As to quaternary structure, monomer and homodimer. It depends on [4Fe-4S] cluster as a cofactor.

It carries out the reaction GTP + AH2 + S-adenosyl-L-methionine = (8S)-3',8-cyclo-7,8-dihydroguanosine 5'-triphosphate + 5'-deoxyadenosine + L-methionine + A + H(+). It participates in cofactor biosynthesis; molybdopterin biosynthesis. In terms of biological role, catalyzes the cyclization of GTP to (8S)-3',8-cyclo-7,8-dihydroguanosine 5'-triphosphate. The polypeptide is GTP 3',8-cyclase (Nitrobacter winogradskyi (strain ATCC 25391 / DSM 10237 / CIP 104748 / NCIMB 11846 / Nb-255)).